The following is a 477-amino-acid chain: MGRTVIVLGGGISGLAASYHLIRGPSPPKVILVEGSKRLGGWIRSIRGSDGAIFELGPRGIRPAGALGARTLLLVSELGLESEVLPVRGDHPAAQNRFLYVGGTLHPLPSGLRGLLRPSPPFSKPLFWAGLRELLKPRGKEPDETVHSFAQRRLGPEVASLAMDSLCRGVFAGNSRELSIRSCFPSLFQAEQTHRSILLGLLLGAGQSPQPDSSLIRQARAERWSQWSLRGGLEVLPQALHNHLASKGVTVLSGQPVCGLSLQPEGRWKVSLGDSSLEADHIISAIPASELSKLLPAEAAPLARILSTIKAVSVAVVNLQYRGACLPVQGFGHLVPSSEDPTVLGIVYDSVAFPEQDGNPPSLRVTVMLGGYWLQKLKAAGHQLSPELFQQQAQEAAATQLGLKEPPSHCLVHLHKNCIPQYTIGHWQKLDSAMQFLTAQRLPLTLAGASYEGVAVNDCIESGRQAAVAVLGTESNS.

FAD is bound by residues 9-14 (GGGISG), W42, 57-60 (GPRG), V257, A449, and 454-456 (VAV).

Belongs to the protoporphyrinogen/coproporphyrinogen oxidase family. Protoporphyrinogen oxidase subfamily. As to quaternary structure, monomer. Homodimer. FAD serves as cofactor.

Its subcellular location is the mitochondrion inner membrane. The enzyme catalyses protoporphyrinogen IX + 3 O2 = protoporphyrin IX + 3 H2O2. It functions in the pathway porphyrin-containing compound metabolism; protoporphyrin-IX biosynthesis; protoporphyrin-IX from protoporphyrinogen-IX: step 1/1. Its activity is regulated as follows. Inhibited by acifluorfen. In terms of biological role, catalyzes the 6-electron oxidation of protoporphyrinogen-IX to form protoporphyrin-IX. The polypeptide is Protoporphyrinogen oxidase (Ppox) (Mus musculus (Mouse)).